The chain runs to 1262 residues: Clustered mitochondria protein homolog (1262 aa).

Positions 1 to 47 are disordered; sequence MTSGSELKAEVDAPVVNGKDELVHEEDNNDSGHSSINTPDASEDKQT. Polar residues predominate over residues 31-40; it reads SGHSSINTPD. The region spanning 335–580 is the Clu domain; it reads AIELIEPFRV…RSMPPDVHYL (246 aa).

It belongs to the CLU family.

The protein localises to the cytoplasm. Functionally, mRNA-binding protein involved in proper cytoplasmic distribution of mitochondria. The protein is Clustered mitochondria protein homolog of Caenorhabditis briggsae.